The following is a 491-amino-acid chain: Ketol-acid reductoisomerase (NADP(+)) (491 aa).

Residues 15 to 208 enclose the KARI N-terminal Rossmann domain; sequence AQLGKCRFMG…GGHRAGVLES (194 aa). NADP(+) is bound by residues 45 to 48, arginine 68, arginine 76, serine 78, and 108 to 110; these read CGAQ and DKQ. Histidine 132 is a catalytic residue. NADP(+) is bound at residue glycine 158. KARI C-terminal knotted domains lie at 209–344 and 345–484; these read SFVA…TAPQ and YEGK…MTDM. Mg(2+) contacts are provided by aspartate 217, glutamate 221, glutamate 389, and glutamate 393. Serine 414 is a substrate binding site.

This sequence belongs to the ketol-acid reductoisomerase family. The cofactor is Mg(2+).

The enzyme catalyses (2R)-2,3-dihydroxy-3-methylbutanoate + NADP(+) = (2S)-2-acetolactate + NADPH + H(+). It carries out the reaction (2R,3R)-2,3-dihydroxy-3-methylpentanoate + NADP(+) = (S)-2-ethyl-2-hydroxy-3-oxobutanoate + NADPH + H(+). It functions in the pathway amino-acid biosynthesis; L-isoleucine biosynthesis; L-isoleucine from 2-oxobutanoate: step 2/4. The protein operates within amino-acid biosynthesis; L-valine biosynthesis; L-valine from pyruvate: step 2/4. Functionally, involved in the biosynthesis of branched-chain amino acids (BCAA). Catalyzes an alkyl-migration followed by a ketol-acid reduction of (S)-2-acetolactate (S2AL) to yield (R)-2,3-dihydroxy-isovalerate. In the isomerase reaction, S2AL is rearranged via a Mg-dependent methyl migration to produce 3-hydroxy-3-methyl-2-ketobutyrate (HMKB). In the reductase reaction, this 2-ketoacid undergoes a metal-dependent reduction by NADPH to yield (R)-2,3-dihydroxy-isovalerate. This is Ketol-acid reductoisomerase (NADP(+)) from Escherichia coli O6:K15:H31 (strain 536 / UPEC).